Here is a 94-residue protein sequence, read N- to C-terminus: Co-chaperonin GroES (94 aa).

It belongs to the GroES chaperonin family. As to quaternary structure, heptamer of 7 subunits arranged in a ring. Interacts with the chaperonin GroEL.

The protein localises to the cytoplasm. In terms of biological role, together with the chaperonin GroEL, plays an essential role in assisting protein folding. The GroEL-GroES system forms a nano-cage that allows encapsulation of the non-native substrate proteins and provides a physical environment optimized to promote and accelerate protein folding. GroES binds to the apical surface of the GroEL ring, thereby capping the opening of the GroEL channel. The protein is Co-chaperonin GroES of Tetragenococcus halophilus (Pediococcus halophilus).